A 296-amino-acid polypeptide reads, in one-letter code: MNTKKEEVVSSPEATVEKKQTQSQTPIVSRDKLLEAGAYFGHKKQMWHPKMKEFIVPKRLNKNAHIIDIVKTQKYLEFAYSLVEKLAAKGVSFIFVGTKRQAKKTVKEAAERTNSLYVSERWLGGTLTNNSVIMKRVQKMNELDKKAEQGFKGYTKKEALLLQKQLDKLHQNLDGIKNMRRLPQVMIVTDLVEDKIAIQEAKKKKIKIIGIVDTNVDPTVIDFGIPANDDSSKSINLIVNILADAIAKTQGKKQMYAYQPDDKIVLSNPHELKKSEEASEVKAASTKEKLTEEASQ.

2 disordered regions span residues 1-24 and 270-296; these read MNTK…TQSQ and HELK…EASQ.

It belongs to the universal ribosomal protein uS2 family.

This chain is Small ribosomal subunit protein uS2, found in Mycoplasmopsis synoviae (strain 53) (Mycoplasma synoviae).